Reading from the N-terminus, the 287-residue chain is Acetyl-coenzyme A carboxylase carboxyl transferase subunit beta (287 aa).

The CoA carboxyltransferase N-terminal domain occupies 28–287; it reads LWKKCPKCEN…ILSLLTNKVA (260 aa). Zn(2+)-binding residues include C32, C35, C51, and C54. The C4-type zinc finger occupies 32–54; that stretch reads CPKCENVLYRPELEKNLDVCPKC.

The protein belongs to the AccD/PCCB family. As to quaternary structure, acetyl-CoA carboxylase is a heterohexamer composed of biotin carboxyl carrier protein (AccB), biotin carboxylase (AccC) and two subunits each of ACCase subunit alpha (AccA) and ACCase subunit beta (AccD). Requires Zn(2+) as cofactor.

It is found in the cytoplasm. The enzyme catalyses N(6)-carboxybiotinyl-L-lysyl-[protein] + acetyl-CoA = N(6)-biotinyl-L-lysyl-[protein] + malonyl-CoA. Its pathway is lipid metabolism; malonyl-CoA biosynthesis; malonyl-CoA from acetyl-CoA: step 1/1. Component of the acetyl coenzyme A carboxylase (ACC) complex. Biotin carboxylase (BC) catalyzes the carboxylation of biotin on its carrier protein (BCCP) and then the CO(2) group is transferred by the transcarboxylase to acetyl-CoA to form malonyl-CoA. The sequence is that of Acetyl-coenzyme A carboxylase carboxyl transferase subunit beta from Marinomonas sp. (strain MWYL1).